A 620-amino-acid chain; its full sequence is Proline--tRNA ligase (620 aa).

This sequence belongs to the class-II aminoacyl-tRNA synthetase family. ProS type 1 subfamily. As to quaternary structure, homodimer.

It is found in the cytoplasm. The enzyme catalyses tRNA(Pro) + L-proline + ATP = L-prolyl-tRNA(Pro) + AMP + diphosphate. Functionally, catalyzes the attachment of proline to tRNA(Pro) in a two-step reaction: proline is first activated by ATP to form Pro-AMP and then transferred to the acceptor end of tRNA(Pro). As ProRS can inadvertently accommodate and process non-cognate amino acids such as alanine and cysteine, to avoid such errors it has two additional distinct editing activities against alanine. One activity is designated as 'pretransfer' editing and involves the tRNA(Pro)-independent hydrolysis of activated Ala-AMP. The other activity is designated 'posttransfer' editing and involves deacylation of mischarged Ala-tRNA(Pro). The misacylated Cys-tRNA(Pro) is not edited by ProRS. The sequence is that of Proline--tRNA ligase from Streptococcus thermophilus (strain ATCC BAA-491 / LMD-9).